A 347-amino-acid chain; its full sequence is Dual specificity mitogen-activated protein kinase kinase 3 (347 aa).

Methionine 1 carries the N-acetylmethionine modification. The span at 1–11 (MESPAASPPAS) shows a compositional bias: pro residues. Positions 1–45 (MESPAASPPASLPQTKGKSKRKKDLRISCVSKPPVSNPTPPRNLD) are disordered. Phosphoserine is present on serine 3. Residues 64–325 (LVTISELGRG…YLELMEHPFF (262 aa)) form the Protein kinase domain. Residues 70–78 (LGRGAYGVV) and lysine 93 each bind ATP. Aspartate 190 functions as the Proton acceptor in the catalytic mechanism. Serine 218 carries the phosphoserine modification. Position 222 is a phosphothreonine (threonine 222).

Belongs to the protein kinase superfamily. STE Ser/Thr protein kinase family. MAP kinase kinase subfamily. In terms of assembly, component of a signaling complex containing at least AKAP13, PKN1, MAPK14, ZAK and MAP2K3. Within this complex, AKAP13 interacts directly with PKN1, which in turn recruits MAPK14, MAP2K3 and ZAK. Binds to DYRK1B/MIRK and increases its kinase activity. Part of a complex with MAP3K3, RAC1 and CCM2. Interacts with ARRB1. Post-translationally, autophosphorylated. Phosphorylation on Ser-218 and Thr-222 by MAP kinase kinase kinases positively regulates the kinase activity. Phosphorylated by TAOK2.

It catalyses the reaction L-seryl-[protein] + ATP = O-phospho-L-seryl-[protein] + ADP + H(+). The enzyme catalyses L-threonyl-[protein] + ATP = O-phospho-L-threonyl-[protein] + ADP + H(+). It carries out the reaction L-tyrosyl-[protein] + ATP = O-phospho-L-tyrosyl-[protein] + ADP + H(+). With respect to regulation, activated by dual phosphorylation on Ser-218 and Thr-222. Functionally, dual specificity kinase. Is activated by cytokines and environmental stress in vivo. Catalyzes the concomitant phosphorylation of a threonine and a tyrosine residue in the MAP kinase p38. Part of a signaling cascade that begins with the activation of the adrenergic receptor ADRA1B and leads to the activation of MAPK14. This is Dual specificity mitogen-activated protein kinase kinase 3 (Map2k3) from Mus musculus (Mouse).